Here is a 196-residue protein sequence, read N- to C-terminus: Imidazoleglycerol-phosphate dehydratase (196 aa).

This sequence belongs to the imidazoleglycerol-phosphate dehydratase family.

It is found in the cytoplasm. The catalysed reaction is D-erythro-1-(imidazol-4-yl)glycerol 3-phosphate = 3-(imidazol-4-yl)-2-oxopropyl phosphate + H2O. It functions in the pathway amino-acid biosynthesis; L-histidine biosynthesis; L-histidine from 5-phospho-alpha-D-ribose 1-diphosphate: step 6/9. The polypeptide is Imidazoleglycerol-phosphate dehydratase (Desulforudis audaxviator (strain MP104C)).